Consider the following 113-residue polypeptide: Hydrogenase maturation factor HypA (113 aa).

A Ni(2+)-binding site is contributed by histidine 2. Cysteine 73, cysteine 76, cysteine 89, and cysteine 92 together coordinate Zn(2+).

It belongs to the HypA/HybF family.

Its function is as follows. Involved in the maturation of [NiFe] hydrogenases. Required for nickel insertion into the metal center of the hydrogenase. In Cereibacter sphaeroides (strain KD131 / KCTC 12085) (Rhodobacter sphaeroides), this protein is Hydrogenase maturation factor HypA.